Here is a 509-residue protein sequence, read N- to C-terminus: ATP synthase subunit alpha (509 aa).

169 to 176 contributes to the ATP binding site; the sequence is GDRQTGKT.

Belongs to the ATPase alpha/beta chains family. In terms of assembly, F-type ATPases have 2 components, CF(1) - the catalytic core - and CF(0) - the membrane proton channel. CF(1) has five subunits: alpha(3), beta(3), gamma(1), delta(1), epsilon(1). CF(0) has three main subunits: a(1), b(2) and c(9-12). The alpha and beta chains form an alternating ring which encloses part of the gamma chain. CF(1) is attached to CF(0) by a central stalk formed by the gamma and epsilon chains, while a peripheral stalk is formed by the delta and b chains.

The protein localises to the cell inner membrane. The enzyme catalyses ATP + H2O + 4 H(+)(in) = ADP + phosphate + 5 H(+)(out). Functionally, produces ATP from ADP in the presence of a proton gradient across the membrane. The alpha chain is a regulatory subunit. The polypeptide is ATP synthase subunit alpha (Brucella anthropi (strain ATCC 49188 / DSM 6882 / CCUG 24695 / JCM 21032 / LMG 3331 / NBRC 15819 / NCTC 12168 / Alc 37) (Ochrobactrum anthropi)).